The sequence spans 173 residues: Ribosome maturation factor RimM (173 aa).

Residues 94-168 (SNESYLCDLL…LIRINPPKGL (75 aa)) enclose the PRC barrel domain.

The protein belongs to the RimM family. Binds ribosomal protein uS19.

It localises to the cytoplasm. Functionally, an accessory protein needed during the final step in the assembly of 30S ribosomal subunit, possibly for assembly of the head region. Essential for efficient processing of 16S rRNA. May be needed both before and after RbfA during the maturation of 16S rRNA. It has affinity for free ribosomal 30S subunits but not for 70S ribosomes. The chain is Ribosome maturation factor RimM from Lawsonia intracellularis (strain PHE/MN1-00).